We begin with the raw amino-acid sequence, 393 residues long: Probable acetyl-CoA acyltransferase (393 aa).

The active-site Acyl-thioester intermediate is the Cys88. Active-site proton acceptor residues include His349 and Cys378.

Belongs to the thiolase-like superfamily. Thiolase family.

The protein localises to the cytoplasm. It carries out the reaction 2 acetyl-CoA = acetoacetyl-CoA + CoA. The chain is Probable acetyl-CoA acyltransferase from Staphylococcus aureus (strain COL).